A 357-amino-acid polypeptide reads, in one-letter code: MRHLPFHGMPLRVQMFCAFFIRSETTDKNKATPTITFMVSCCFVWVKRLFYRVGRIHHVQSLTYARPITALDSCLYVCCGYGEKLQPVGFVKSYVTNSQLDTLRVLLVGKDGAVYVHHMRAARLCRLASSTTEFTRRGLQRDAVTYEEDLELPDQRMCGTNARHLFDVIAAAADEHNLLTVGGLCQTHAGVSCNLLETVGDPWTAVPAARMTLTVPQVQYRLWPEARRDLRRHLYAGHPLGPWLVCGVLSRERETQKPSPPIRTTVGNVPTPGPREVEIAWVVLTLAGPLLAFWPDTGKICRLANSFSTLWKMGPRAMRGHWTYSAPGRHLPGDAWPLCEHVRPQVGKLPRKRAYLD.

The segment at 107–187 (LVGKDGAVYV…LLTVGGLCQT (81 aa)) is interaction with host p53.

It belongs to the herpesviridae US22 family. Interacts with host p53 and inhibits p53-activated transcription.

Functionally, involved in transactivation. Displays transforming activity. This is Transactivator protein DR7 (DR7L) from Homo sapiens (Human).